We begin with the raw amino-acid sequence, 384 residues long: Urea transporter 1 (384 aa).

At E39 the chain carries Phosphoserine. Helical transmembrane passes span 61–81, 85–105, 111–131, 138–158, and 168–188; these read ISQV…VGLL, PWWA…ALLL, AIAA…MAVF, FWWL…FSSA, and LPVF…ATGH. An N-linked (GlcNAc...) asparagine glycan is attached at N206. Helical transmembrane passes span 250–270, 276–296, 305–325, and 327–347; these read LMCL…LSLA, IYFG…GGMF, LLAL…AHLM, and VVHL…FLLL.

The protein belongs to the urea transporter family. As to quaternary structure, homotrimer; each subunit contains a pore through which urea permeates. Identified in a complex with STOM. In terms of processing, N-glycosylated in red blood cells, as well as in most non-erythroid tissues, except in the gastrocnemius muscle and in the gastrointestinal tract, including liver, colon and stomach. Expressed in brain, kidney, heart, liver, lung, skeletal muscle, spleen, testis, ureter and urinary bladder (at protein level). Along the gastrointestinal tract, detected in colon, jejunum and stomach (at protein level). In the kidney, expressed in some microvessels of the inner and outer medulla, but not all (at protein level). Not detected in the cortex (at protein level). Detected in the urothelium all along the urinary tract, including the papilla surface, the ureter, the bladder and the urethra (at protein level). In the brain, expressed at the border of the corpus callosum and striatum in astrocytic cellular processes surrounding blood microvessels (at protein level). Detected in erythrocytes (at protein level).

It localises to the cell membrane. It is found in the basolateral cell membrane. It catalyses the reaction urea(in) = urea(out). Functionally, mediates the transport of urea driven by a concentration gradient across the cell membranes of erythrocytes and the renal inner medullary collecting duct which is critical to the urinary concentrating mechanism. Facilitates water transport in erythrocytes. In Mus musculus (Mouse), this protein is Urea transporter 1 (Slc14a1).